A 124-amino-acid polypeptide reads, in one-letter code: Mitochondrial import inner membrane translocase subunit TIM16 (124 aa).

Positions 58–109 (EAQQILNISKLSPEEVQNYEHLFKVNDKSVGDSFYLQSKVVRAKERLDEELQ) are J-like. At Ser69 the chain carries Phosphoserine.

Belongs to the TIM16/PAM16 family. As to quaternary structure, probable component of the PAM complex at least composed of a mitochondrial HSP70 protein, GRPEL1 or GRPEL2, TIMM44, TIMM16/PAM16 and TIMM14/DNAJC19. Interacts with DNAJC19. Directly interacts with DNAJC15; this interaction counteracts DNAJC15-dependent stimulation of HSPA9 ATPase activity. Associates with the TIM23 complex.

It localises to the mitochondrion inner membrane. Its function is as follows. Regulates ATP-dependent protein translocation into the mitochondrial matrix. Inhibits DNAJC19 stimulation of HSPA9/Mortalin ATPase activity. This Rattus norvegicus (Rat) protein is Mitochondrial import inner membrane translocase subunit TIM16 (Magmas-ps1).